The sequence spans 549 residues: Protein EPD2 (549 aa).

An N-terminal signal peptide occupies residues 1 to 20 (MISVIKSLLTLSVLSTLAAA). An N-linked (GlcNAc...) asparagine glycan is attached at N41. A disulfide bridge links C82 with C111. Residues N173 and N261 are each glycosylated (N-linked (GlcNAc...) asparagine). Disulfide bonds link C224–C358, C242–C273, C381–C432, C390–C456, and C409–C414. N-linked (GlcNAc...) asparagine glycosylation occurs at N467. The interval 470–518 (ASTSCSAAGGRGLQSGRRSSTTRGGSSSSRSSSSSSSSSTGSGSSNAGI) is disordered. Low complexity predominate over residues 484-514 (SGRRSSTTRGGSSSSRSSSSSSSSSTGSGSS).

It belongs to the glycosyl hydrolase 72 family.

Its subcellular location is the cell membrane. This is Protein EPD2 (EPD2) from Candida maltosa (Yeast).